The primary structure comprises 641 residues: MHLKKYLLKGLHRLQKGPGYSYKELLVWYCNNTNTHGPKRIICEGPKKKAMWFLITLLFTSLVCWQWGVFIRTYLSWEVSVSLSLGFKTMDFPAVTICNASPFQYSKVKHLLRDLDELMEAVLERILAPEHSDANATRTLNVTMWNYTPLVLIDEQNPHCPVVLDLFGDIHNGSASSSPAPARSCTVHGCKVAMRLCSLNGTVCTFRNFTSATQAVTEWYLLQATNIFSQVPQRELVEMSYPAERLILACLFGAEPCSYRNFTSIFHPDYGNCYIFNWGMTEKALPSANPGAEFGLKLILDIGQEDYVPFLTSTAGARLMLHEQRSYPFIKDEGIYAMSGTETSIGVLVDRLERKGEPYSQCTVNGSDVPVRNLYSDYNTTYSIQACIRSCFQDHMIQNCSCAHYLYPLPRGERYCNNREFPDWAYCYSHLRMSVAQRETCINMCKESCNDTQYKMTISMADWPSEASEDWIFHVLSQERDQSTNITLSRKGVVKLNIYFQEFNYRTIEESAANNIVWLLSNLGGQFGFWMGGSVLCLIEFGEILIDFVWITIIKLVAFAKSLRQKRAQARYAGPPPTVAELVEAHTNFGFQPDVARPGPDPGTYPDEQTLPIPGTPPPNYDSLRLQPLDVIESDSEGDAI.

Topologically, residues M1 to A50 are cytoplasmic. A helical transmembrane segment spans residues M51–I71. At R72 to G533 the chain is on the extracellular side. 9 disulfides stabilise this stretch: C98–C273, C185–C190, C197–C204, C250–C257, C362–C449, C387–C445, C391–C441, C400–C427, and C402–C416. Residue N141 is glycosylated (N-linked (GlcNAc...) asparagine). N-linked (GlcNAc...) asparagine glycosylation occurs at N261. The chain crosses the membrane as a helical span at residues S534 to I554. Over K555 to I641 the chain is Cytoplasmic. Positions P593 to L624 are disordered. Positions P617–Y621 match the PY motif; recruits WW domain-containing proteins and is thereby required for ubiquitination and inhibition of the channel by NEDD4 and NEDD4L motif. Residues S634 and S636 each carry the phosphoserine modification.

Belongs to the amiloride-sensitive sodium channel (TC 1.A.6) family. SCNN1B subfamily. Component of the heterotrimeric epithelial sodium channel (ENaC) composed of an alpha/SCNN1A, a beta/SCNN1B and a gamma/SCNN1G subunit. An additional delta/SCNN1D subunit can replace the alpha/SCNN1A subunit to form an alternative channel with specific properties. Interacts with WWP1 (via WW domains). Interacts with WWP2 (via WW domains); inhibits the channel. Interacts with the full-length immature form of PCSK9 (pro-PCSK9). Interacts (N-glycosylated) with BPIFA1; the interaction is direct and inhibits the proteolytic processing of SCNN1A and SCNN1G and the activation of ENaC. In terms of processing, ubiquitinated. Can be ubiquitinated at multiple sites and undergo monoubiquitination and polyubiquitination. Ubiquitination by NEDD4 or NEDD4L inhibits the ENaC channel through endocytosis, intracellular retention and degradation of its individual subunits. However, some studies could not confirm the ubiquitination of this subunit of the ENaC. Phosphorylated on serine and threonine residues. Aldosterone and insulin increase the basal level of phosphorylation. Post-translationally, N-glycosylated. N-glycosylation is required for interaction with BPIFA1.

Its subcellular location is the apical cell membrane. It localises to the cytoplasmic vesicle membrane. The enzyme catalyses Na(+)(in) = Na(+)(out). Its activity is regulated as follows. Originally identified and characterized by its inhibition by the diuretic drug amiloride. In terms of biological role, this is one of the three pore-forming subunits of the heterotrimeric epithelial sodium channel (ENaC), a critical regulator of sodium balance and fluid homeostasis. ENaC operates in epithelial tissues, where it mediates the electrodiffusion of sodium ions from extracellular fluid through the apical membrane of cells, with water following osmotically. It plays a key role in maintaining sodium homeostasis through electrogenic sodium reabsorption in the kidneys. Additionally, ENaC is essential for airway surface liquid homeostasis, which is crucial for proper mucus clearance. This Canis lupus familiaris (Dog) protein is Epithelial sodium channel subunit beta.